Here is a 583-residue protein sequence, read N- to C-terminus: Putative fatty-acid--CoA ligase fadD25 (583 aa).

3 helical membrane passes run 77 to 97 (YVVSFIASLQAGIVAVPLSIP), 109 to 129 (VFADTAPAIVLTASSVVDNVV), and 229 to 249 (FVLGLILPILAGIPAVLTSPI). Positions 353–375 (IVQFDPQKLPDGQAERTESDGGT) are disordered.

Belongs to the ATP-dependent AMP-binding enzyme family.

It is found in the cell membrane. The protein is Putative fatty-acid--CoA ligase fadD25 (fadD25) of Mycobacterium tuberculosis (strain CDC 1551 / Oshkosh).